The sequence spans 486 residues: Hexokinase-2 (486 aa).

Serine 15 carries the phosphoserine modification. The region spanning 21 to 469 (KELMQQIENF…SGAGAAVIAA (449 aa)) is the Hexokinase domain. Threonine 38 carries the phosphothreonine modification. The hexokinase small subdomain stretch occupies residues 75 to 209 (TGKESGDFLA…NIPIEVVALI (135 aa)). Residues 86-91 (DLGGTN) and lysine 111 each bind ATP. Serine 158 bears the Phosphoserine mark. Substrate contacts are provided by residues serine 158, 175 to 176 (TK), 210 to 211 (ND), and asparagine 237. A hexokinase large subdomain region spans residues 210-458 (NDTTGTLVAS…YPIKIVPAED (249 aa)). Serine 245 carries the post-translational modification Phosphoserine. Glutamate 269 lines the substrate pocket. Residue serine 272 is modified to Phosphoserine. Glutamate 302 provides a ligand contact to substrate. ATP contacts are provided by residues 307-308 (GY), 344-348 (TSYPA), and 419-423 (SVYNR).

This sequence belongs to the hexokinase family. Homodimer.

The catalysed reaction is a D-hexose + ATP = a D-hexose 6-phosphate + ADP + H(+). It carries out the reaction D-fructose + ATP = D-fructose 6-phosphate + ADP + H(+). The enzyme catalyses D-glucose + ATP = D-glucose 6-phosphate + ADP + H(+). It participates in carbohydrate metabolism; hexose metabolism. The protein operates within carbohydrate degradation; glycolysis; D-glyceraldehyde 3-phosphate and glycerone phosphate from D-glucose: step 1/4. Its activity is regulated as follows. Subject to allosteric control. Substrate inhibition by ATP. In terms of biological role, catalyzes the phosphorylation of hexose, such as D-glucose and D-fructose, to hexose 6-phosphate (D-glucose 6-phosphate and D-fructose 6-phosphate, respectively). Mediates the initial step of glycolysis by catalyzing phosphorylation of D-glucose to D-glucose 6-phosphate. In Saccharomyces cerevisiae (strain ATCC 204508 / S288c) (Baker's yeast), this protein is Hexokinase-2 (HXK2).